The chain runs to 315 residues: Malate dehydrogenase (315 aa).

NAD(+)-binding positions include 10 to 15 (GAGNVG) and D34. R85 and R91 together coordinate substrate. NAD(+)-binding positions include N98 and 121-123 (VSN). 2 residues coordinate substrate: N123 and R154. H178 (proton acceptor) is an active-site residue.

This sequence belongs to the LDH/MDH superfamily. MDH type 3 family.

The catalysed reaction is (S)-malate + NAD(+) = oxaloacetate + NADH + H(+). Catalyzes the reversible oxidation of malate to oxaloacetate. The protein is Malate dehydrogenase of Rhodopirellula baltica (strain DSM 10527 / NCIMB 13988 / SH1).